The sequence spans 619 residues: 2-isopropylmalate synthase (619 aa).

Residues 61 to 336 (PRWLSTDLRD…SPNLDFSDLT (276 aa)) enclose the Pyruvate carboxyltransferase domain. Residues D70, H275, H277, and N311 each contribute to the a divalent metal cation site.

This sequence belongs to the alpha-IPM synthase/homocitrate synthase family. LeuA type 2 subfamily. In terms of assembly, homodimer. The cofactor is a divalent metal cation.

It localises to the cytoplasm. It is found in the mitochondrion. The catalysed reaction is 3-methyl-2-oxobutanoate + acetyl-CoA + H2O = (2S)-2-isopropylmalate + CoA + H(+). It functions in the pathway amino-acid biosynthesis; L-leucine biosynthesis; L-leucine from 3-methyl-2-oxobutanoate: step 1/4. In terms of biological role, catalyzes the condensation of the acetyl group of acetyl-CoA with 3-methyl-2-oxobutanoate (2-oxoisovalerate) to form 3-carboxy-3-hydroxy-4-methylpentanoate (2-isopropylmalate). This Saccharomyces cerevisiae (strain ATCC 204508 / S288c) (Baker's yeast) protein is 2-isopropylmalate synthase (LEU4).